Reading from the N-terminus, the 396-residue chain is Tryptophan synthase beta chain (396 aa).

Residue lysine 86 is modified to N6-(pyridoxal phosphate)lysine.

This sequence belongs to the TrpB family. In terms of assembly, tetramer of two alpha and two beta chains. It depends on pyridoxal 5'-phosphate as a cofactor.

The catalysed reaction is (1S,2R)-1-C-(indol-3-yl)glycerol 3-phosphate + L-serine = D-glyceraldehyde 3-phosphate + L-tryptophan + H2O. It functions in the pathway amino-acid biosynthesis; L-tryptophan biosynthesis; L-tryptophan from chorismate: step 5/5. In terms of biological role, the beta subunit is responsible for the synthesis of L-tryptophan from indole and L-serine. In Pectobacterium carotovorum subsp. carotovorum (strain PC1), this protein is Tryptophan synthase beta chain.